A 412-amino-acid polypeptide reads, in one-letter code: Tyrosine--tRNA ligase (412 aa).

Tyr41 lines the L-tyrosine pocket. The short motif at 46–55 (ATADSLHVGH) is the 'HIGH' region element. Residues Tyr174 and Gln178 each contribute to the L-tyrosine site. A 'KMSKS' region motif is present at residues 234 to 238 (KMGKS). Lys237 contacts ATP. Residues 348-411 (LSLTDLLLEH…KKQHLHLRLE (64 aa)) enclose the S4 RNA-binding domain.

Belongs to the class-I aminoacyl-tRNA synthetase family. TyrS type 1 subfamily. In terms of assembly, homodimer.

The protein resides in the cytoplasm. The catalysed reaction is tRNA(Tyr) + L-tyrosine + ATP = L-tyrosyl-tRNA(Tyr) + AMP + diphosphate + H(+). Its function is as follows. Catalyzes the attachment of tyrosine to tRNA(Tyr) in a two-step reaction: tyrosine is first activated by ATP to form Tyr-AMP and then transferred to the acceptor end of tRNA(Tyr). The polypeptide is Tyrosine--tRNA ligase (Pseudomonas aeruginosa (strain LESB58)).